Consider the following 249-residue polypeptide: Tabinhibitin 4 (249 aa).

The signal sequence occupies residues Met1–Thr23. The Cell attachment site motif lies at Arg31–Asp33. The 144-residue stretch at Leu64–Phe207 folds into the SCP domain. The Cell attachment site signature appears at Arg220–Asp222.

Belongs to the CRISP family. Expressed in salivary glands.

The protein resides in the secreted. In terms of biological role, inhibits platelet aggregation induced by all agonists tested (ADP, arachidonic acid, the thromboxane A2 analog U46619, thrombin, and snake venom snaclecs (TMVA that activates platelet through GPIB, and stejnulxin that specifically acts through GPVI (GP6))). May act by competing with fibrinogen for binding to glycoprotein IIb/IIIa (ITGA2B/ITGB3). This is Tabinhibitin 4 from Tabanus yao (Horsefly).